The primary structure comprises 86 residues: MATKKAGGSSRNGRDSAGRRLGVKKADGQYVIPGNIIVRQRGTKIHPGMNVGLGKDHTIFALIEGRVEFLTKRNHKIVNVNEIAST.

The disordered stretch occupies residues 1–22; it reads MATKKAGGSSRNGRDSAGRRLG.

The protein belongs to the bacterial ribosomal protein bL27 family.

This chain is Large ribosomal subunit protein bL27, found in Rickettsia peacockii (strain Rustic).